The sequence spans 196 residues: Molybdenum cofactor guanylyltransferase (196 aa).

GTP-binding positions include 10 to 12 (LAG), K23, N51, D69, and D99. D99 lines the Mg(2+) pocket.

It belongs to the MobA family. As to quaternary structure, monomer. It depends on Mg(2+) as a cofactor.

It is found in the cytoplasm. It catalyses the reaction Mo-molybdopterin + GTP + H(+) = Mo-molybdopterin guanine dinucleotide + diphosphate. Its function is as follows. Transfers a GMP moiety from GTP to Mo-molybdopterin (Mo-MPT) cofactor (Moco or molybdenum cofactor) to form Mo-molybdopterin guanine dinucleotide (Mo-MGD) cofactor. The protein is Molybdenum cofactor guanylyltransferase of Shewanella loihica (strain ATCC BAA-1088 / PV-4).